Here is a 259-residue protein sequence, read N- to C-terminus: Caffeoyl-CoA O-methyltransferase (259 aa).

K33 lines the substrate pocket. S-adenosyl-L-methionine is bound by residues T75, E97, 99–100, S105, D123, and A152; that span reads GV. D175 contacts substrate. A divalent metal cation is bound at residue D175. D177 serves as a coordination point for S-adenosyl-L-methionine. Residues D201 and N202 each coordinate a divalent metal cation. Residue N206 participates in substrate binding.

It belongs to the class I-like SAM-binding methyltransferase superfamily. Cation-dependent O-methyltransferase family. CCoAMT subfamily. Requires a divalent metal cation as cofactor.

It carries out the reaction (E)-caffeoyl-CoA + S-adenosyl-L-methionine = (E)-feruloyl-CoA + S-adenosyl-L-homocysteine + H(+). The protein operates within aromatic compound metabolism; phenylpropanoid biosynthesis. Its function is as follows. Methylates caffeoyl-CoA to feruloyl-CoA and 5-hydroxyferuloyl-CoA to sinapoyl-CoA. Plays a role in the synthesis of feruloylated polysaccharides. Involved in the reinforcement of the plant cell wall. Also involved in the responding to wounding or pathogen challenge by the increased formation of cell wall-bound ferulic acid polymers. This is Caffeoyl-CoA O-methyltransferase (CCOAOMT) from Pinus taeda (Loblolly pine).